The sequence spans 116 residues: Large ribosomal subunit protein bL17 (116 aa).

The protein belongs to the bacterial ribosomal protein bL17 family. Part of the 50S ribosomal subunit. Contacts protein L32.

The chain is Large ribosomal subunit protein bL17 from Synechococcus sp. (strain WH7803).